A 156-amino-acid chain; its full sequence is ATP synthase subunit b (156 aa).

Residues 7-29 (LLGQAIAFALFVWFCMKYVWPPI) traverse the membrane as a helical segment.

This sequence belongs to the ATPase B chain family. In terms of assembly, F-type ATPases have 2 components, F(1) - the catalytic core - and F(0) - the membrane proton channel. F(1) has five subunits: alpha(3), beta(3), gamma(1), delta(1), epsilon(1). F(0) has three main subunits: a(1), b(2) and c(10-14). The alpha and beta chains form an alternating ring which encloses part of the gamma chain. F(1) is attached to F(0) by a central stalk formed by the gamma and epsilon chains, while a peripheral stalk is formed by the delta and b chains.

The protein localises to the cell inner membrane. Functionally, f(1)F(0) ATP synthase produces ATP from ADP in the presence of a proton or sodium gradient. F-type ATPases consist of two structural domains, F(1) containing the extramembraneous catalytic core and F(0) containing the membrane proton channel, linked together by a central stalk and a peripheral stalk. During catalysis, ATP synthesis in the catalytic domain of F(1) is coupled via a rotary mechanism of the central stalk subunits to proton translocation. Its function is as follows. Component of the F(0) channel, it forms part of the peripheral stalk, linking F(1) to F(0). The polypeptide is ATP synthase subunit b (Aliivibrio salmonicida (strain LFI1238) (Vibrio salmonicida (strain LFI1238))).